The chain runs to 742 residues: Polyphosphate kinase (742 aa).

Position 91 (asparagine 91) interacts with ATP. Mg(2+) is bound by residues arginine 431 and arginine 461. Histidine 491 acts as the Phosphohistidine intermediate in catalysis. Residues tyrosine 524, arginine 624, and histidine 652 each coordinate ATP. The interval 718–742 is disordered; the sequence is WTASPQEGHSVRDHQESLMERHRSP. The segment covering 726–742 has biased composition (basic and acidic residues); that stretch reads HSVRDHQESLMERHRSP.

Belongs to the polyphosphate kinase 1 (PPK1) family. Mg(2+) is required as a cofactor. An intermediate of this reaction is the autophosphorylated ppk in which a phosphate is covalently linked to a histidine residue through a N-P bond.

It carries out the reaction [phosphate](n) + ATP = [phosphate](n+1) + ADP. In terms of biological role, catalyzes the reversible transfer of the terminal phosphate of ATP to form a long-chain polyphosphate (polyP). The protein is Polyphosphate kinase of Mycobacterium bovis (strain ATCC BAA-935 / AF2122/97).